A 215-amino-acid polypeptide reads, in one-letter code: Oligoribonuclease (215 aa).

One can recognise an Exonuclease domain in the interval 5–170; that stretch reads LVWIDCEMTG…ADIHESIREL (166 aa). Y127 is an active-site residue. The tract at residues 196-215 is disordered; the sequence is LDEGKDAPGPSDSASAPPTG. A compositionally biased stretch (low complexity) spans 202 to 215; that stretch reads APGPSDSASAPPTG.

Belongs to the oligoribonuclease family.

Its subcellular location is the cytoplasm. In terms of biological role, 3'-to-5' exoribonuclease specific for small oligoribonucleotides. The sequence is that of Oligoribonuclease from Mycobacterium avium (strain 104).